Reading from the N-terminus, the 106-residue chain is Putative protein LRRC37A5P (106 aa).

This Homo sapiens (Human) protein is Putative protein LRRC37A5P (LRRC37A5P).